The chain runs to 89 residues: Small ribosomal subunit protein bS20 (89 aa).

Residues 1–10 show a composition bias toward basic residues; that stretch reads MKNRSAIKRH. A disordered region spans residues 1 to 30; the sequence is MKNRSAIKRHNQSEVRRMRNRSAKSEVRTT. Positions 11-30 are enriched in basic and acidic residues; that stretch reads NQSEVRRMRNRSAKSEVRTT.

Belongs to the bacterial ribosomal protein bS20 family.

Its function is as follows. Binds directly to 16S ribosomal RNA. This chain is Small ribosomal subunit protein bS20, found in Treponema denticola (strain ATCC 35405 / DSM 14222 / CIP 103919 / JCM 8153 / KCTC 15104).